Consider the following 126-residue polypeptide: Probable S-adenosyl-L-methionine-binding protein MJ1583 (126 aa).

The TsaA-like domain maps to 4–126 (LKPIGVVEQN…FSEKLDCPKI (123 aa)). S-adenosyl-L-methionine contacts are provided by residues 45–46 (HK), R75, and 106–109 (YNET).

It belongs to the tRNA methyltransferase O family.

This Methanocaldococcus jannaschii (strain ATCC 43067 / DSM 2661 / JAL-1 / JCM 10045 / NBRC 100440) (Methanococcus jannaschii) protein is Probable S-adenosyl-L-methionine-binding protein MJ1583.